Reading from the N-terminus, the 68-residue chain is Cytotoxic linear peptide (68 aa).

The signal sequence occupies residues 1 to 23 (MKTQFAILLIALVLFQMFSQSEA). Leu36 is modified (leucine amide). A propeptide spanning residues 40–68 (GLNELDDLDELFDGEISQADIDFLKELMS) is cleaved from the precursor.

It belongs to the non-disulfide-bridged peptide (NDBP) superfamily. Short antimicrobial peptide (group 4) family. As to expression, expressed by the venom gland.

It is found in the secreted. It localises to the target cell membrane. Amphipathic peptide that has antibacterial activities. The protein is Cytotoxic linear peptide of Pandinus cavimanus (Tanzanian red clawed scorpion).